The sequence spans 160 residues: Glyoxalase domain-containing protein 5 (160 aa).

Positions 33–153 constitute a VOC domain; it reads RLDHLVLTVR…DHNLIEVSNY (121 aa).

The protein belongs to the glyoxalase I family.

This is Glyoxalase domain-containing protein 5 (glod5) from Xenopus laevis (African clawed frog).